Reading from the N-terminus, the 342-residue chain is D-erythrose-4-phosphate dehydrogenase (342 aa).

11-12 contacts NAD(+); sequence RI. Residues 153 to 155, Arg199, 212 to 213, and Arg235 contribute to the substrate site; these read SCT and TK. Residue Cys154 is the Nucleophile of the active site. Asn317 provides a ligand contact to NAD(+).

This sequence belongs to the glyceraldehyde-3-phosphate dehydrogenase family. Epd subfamily. In terms of assembly, homotetramer.

The protein resides in the cytoplasm. It carries out the reaction D-erythrose 4-phosphate + NAD(+) + H2O = 4-phospho-D-erythronate + NADH + 2 H(+). It functions in the pathway cofactor biosynthesis; pyridoxine 5'-phosphate biosynthesis; pyridoxine 5'-phosphate from D-erythrose 4-phosphate: step 1/5. In terms of biological role, catalyzes the NAD-dependent conversion of D-erythrose 4-phosphate to 4-phosphoerythronate. The sequence is that of D-erythrose-4-phosphate dehydrogenase from Shewanella denitrificans (strain OS217 / ATCC BAA-1090 / DSM 15013).